Reading from the N-terminus, the 161-residue chain is ATP synthase subunit b 1 (161 aa).

A helical transmembrane segment spans residues 5–25; the sequence is AETWVAVAFVLMVALFIYFGA.

The protein belongs to the ATPase B chain family. In terms of assembly, F-type ATPases have 2 components, F(1) - the catalytic core - and F(0) - the membrane proton channel. F(1) has five subunits: alpha(3), beta(3), gamma(1), delta(1), epsilon(1). F(0) has three main subunits: a(1), b(2) and c(10-14). The alpha and beta chains form an alternating ring which encloses part of the gamma chain. F(1) is attached to F(0) by a central stalk formed by the gamma and epsilon chains, while a peripheral stalk is formed by the delta and b chains.

It is found in the cell inner membrane. F(1)F(0) ATP synthase produces ATP from ADP in the presence of a proton or sodium gradient. F-type ATPases consist of two structural domains, F(1) containing the extramembraneous catalytic core and F(0) containing the membrane proton channel, linked together by a central stalk and a peripheral stalk. During catalysis, ATP synthesis in the catalytic domain of F(1) is coupled via a rotary mechanism of the central stalk subunits to proton translocation. Its function is as follows. Component of the F(0) channel, it forms part of the peripheral stalk, linking F(1) to F(0). This Afipia carboxidovorans (strain ATCC 49405 / DSM 1227 / KCTC 32145 / OM5) (Oligotropha carboxidovorans) protein is ATP synthase subunit b 1.